The following is a 432-amino-acid chain: Enolase (432 aa).

Gln-163 serves as a coordination point for (2R)-2-phosphoglycerate. Glu-205 functions as the Proton donor in the catalytic mechanism. Mg(2+) is bound by residues Asp-242, Glu-288, and Asp-315. (2R)-2-phosphoglycerate is bound by residues Lys-340, Arg-369, Ser-370, and Lys-391. The active-site Proton acceptor is Lys-340.

This sequence belongs to the enolase family. In terms of assembly, homodimer. Mg(2+) serves as cofactor.

Its subcellular location is the cytoplasm. The protein localises to the secreted. It localises to the cell surface. It carries out the reaction (2R)-2-phosphoglycerate = phosphoenolpyruvate + H2O. It functions in the pathway carbohydrate degradation; glycolysis; pyruvate from D-glyceraldehyde 3-phosphate: step 4/5. The covalent binding to the substrate causes inactivation of the enzyme, and possibly serves as a signal for the export of the protein. Functionally, catalyzes the reversible conversion of 2-phosphoglycerate (2-PG) into phosphoenolpyruvate (PEP). It is essential for the degradation of carbohydrates via glycolysis. In Enterococcus hirae, this protein is Enolase.